A 194-amino-acid chain; its full sequence is Thymidine kinase (194 aa).

ATP contacts are provided by residues Gly-15 to Ser-22 and Asp-88 to Gln-91. Glu-89 functions as the Proton acceptor in the catalytic mechanism. Positions 145, 148, 183, and 186 each coordinate Zn(2+).

Belongs to the thymidine kinase family. In terms of assembly, homotetramer.

It is found in the cytoplasm. It catalyses the reaction thymidine + ATP = dTMP + ADP + H(+). This is Thymidine kinase from Bacillus licheniformis (strain ATCC 14580 / DSM 13 / JCM 2505 / CCUG 7422 / NBRC 12200 / NCIMB 9375 / NCTC 10341 / NRRL NRS-1264 / Gibson 46).